Here is a 396-residue protein sequence, read N- to C-terminus: L-lactate dehydrogenase (396 aa).

Positions 1–380 constitute an FMN hydroxy acid dehydrogenase domain; it reads MIISAASDYR…SGDSLVQELG (380 aa). Y24 contacts substrate. Positions 106 and 127 each coordinate FMN. Substrate is bound at residue Y129. FMN is bound at residue T155. R164 provides a ligand contact to substrate. FMN is bound at residue K251. H275 serves as the catalytic Proton acceptor. Substrate is bound at residue R278. 306–330 is an FMN binding site; it reads DSGIRNGLDVVRMIALGADTVLLGR.

The protein belongs to the FMN-dependent alpha-hydroxy acid dehydrogenase family. FMN is required as a cofactor.

Its subcellular location is the cell inner membrane. The catalysed reaction is (S)-lactate + A = pyruvate + AH2. Its function is as follows. Catalyzes the conversion of L-lactate to pyruvate. Is coupled to the respiratory chain. The polypeptide is L-lactate dehydrogenase (Salmonella paratyphi B (strain ATCC BAA-1250 / SPB7)).